Consider the following 129-residue polypeptide: Small ribosomal subunit protein eS6 (129 aa).

It belongs to the eukaryotic ribosomal protein eS6 family.

In Archaeoglobus fulgidus (strain ATCC 49558 / DSM 4304 / JCM 9628 / NBRC 100126 / VC-16), this protein is Small ribosomal subunit protein eS6.